Here is a 732-residue protein sequence, read N- to C-terminus: mRNA-binding protein puf3 (732 aa).

The disordered stretch occupies residues Pro98–Ser123. Positions Ser100 to Ser109 are enriched in polar residues. Residues Gln376–Arg716 enclose the PUM-HD domain. Pumilio repeat units lie at residues Asp396–Gln431, Glu432–Ser468, Gln469–Gln504, Glu505–Arg540, Ala541–Glu576, Leu577–Asp611, Leu612–Asn647, and Glu655–Ser690.

This sequence belongs to the PUF3 family.

It is found in the mitochondrion outer membrane. The protein resides in the cytoplasm. RNA-binding protein involved in post-transcriptional regulation. Predominantly binds to mRNAs encoding mitochondrial proteins and localizes them to the vicinity of mitochondria for translation. Regulates mitochondrial biogenesis, motility and morphology. The chain is mRNA-binding protein puf3 (puf3) from Schizosaccharomyces pombe (strain 972 / ATCC 24843) (Fission yeast).